We begin with the raw amino-acid sequence, 688 residues long: DNA ligase (688 aa).

NAD(+) is bound by residues 42 to 46 (DAEYD), 91 to 92 (SL), and glutamate 128. The active-site N6-AMP-lysine intermediate is lysine 130. Residues arginine 151, glutamate 188, lysine 305, and lysine 329 each contribute to the NAD(+) site. Zn(2+) is bound by residues cysteine 423, cysteine 426, cysteine 441, and cysteine 447. One can recognise a BRCT domain in the interval 608-688 (APQGVLAGKT…GMRKLLEGQL (81 aa)).

It belongs to the NAD-dependent DNA ligase family. LigA subfamily. Requires Mg(2+) as cofactor. It depends on Mn(2+) as a cofactor.

It catalyses the reaction NAD(+) + (deoxyribonucleotide)n-3'-hydroxyl + 5'-phospho-(deoxyribonucleotide)m = (deoxyribonucleotide)n+m + AMP + beta-nicotinamide D-nucleotide.. Its function is as follows. DNA ligase that catalyzes the formation of phosphodiester linkages between 5'-phosphoryl and 3'-hydroxyl groups in double-stranded DNA using NAD as a coenzyme and as the energy source for the reaction. It is essential for DNA replication and repair of damaged DNA. The sequence is that of DNA ligase from Paraburkholderia xenovorans (strain LB400).